The primary structure comprises 329 residues: L-lactate dehydrogenase (329 aa).

Residues valine 18, glutamate 39, lysine 46, tyrosine 71, and 85 to 86 (GA) each bind NAD(+). Substrate-binding residues include glutamine 88 and arginine 94. NAD(+) is bound by residues serine 107, 124 to 126 (AAN), and serine 149. 126–129 (NPVD) serves as a coordination point for substrate. 154 to 157 (DSAR) is a binding site for substrate. Residues arginine 159 and histidine 174 each coordinate beta-D-fructose 1,6-bisphosphate. Histidine 181 serves as the catalytic Proton acceptor. A Phosphotyrosine modification is found at tyrosine 226. Threonine 235 provides a ligand contact to substrate.

The protein belongs to the LDH/MDH superfamily. LDH family. As to quaternary structure, homotetramer.

It localises to the cytoplasm. The catalysed reaction is (S)-lactate + NAD(+) = pyruvate + NADH + H(+). It functions in the pathway fermentation; pyruvate fermentation to lactate; (S)-lactate from pyruvate: step 1/1. Its activity is regulated as follows. Allosterically activated by fructose 1,6-bisphosphate (FBP). In terms of biological role, catalyzes the conversion of lactate to pyruvate. The chain is L-lactate dehydrogenase from Streptococcus agalactiae serotype V (strain ATCC BAA-611 / 2603 V/R).